The chain runs to 257 residues: Gamma-secretase subunit APH-1B (257 aa).

Helical transmembrane passes span 5-25, 32-52, 66-86, 115-135, 160-180, 186-206, and 213-233; these read VFFG…VFTI, VIFL…SSVF, PVQN…QELF, LLAY…SFVN, AFMT…FFDG, WYTL…TFLS, and LVTA…VAGG.

The protein belongs to the APH-1 family. Probable component of the gamma-secretase complex, a complex composed of a presenilin homodimer (PSEN1 or PSEN2), nicastrin (NCSTN), APH1 (APH1A or APH1B) and PEN2. Such minimal complex is sufficient for secretase activity, although other components may exist. Interacts with PSEN1 and PSEN2.

The protein localises to the membrane. Probable subunit of the gamma-secretase complex, an endoprotease complex that catalyzes the intramembrane cleavage of integral proteins such as Notch receptors and APP (amyloid-beta precursor protein). It probably represents a stabilizing cofactor for the presenilin homodimer that promotes the formation of a stable complex. Probably present in a minority of gamma-secretase complexes compared to APH1A. The polypeptide is Gamma-secretase subunit APH-1B (Aph1b) (Mus musculus (Mouse)).